We begin with the raw amino-acid sequence, 126 residues long: Histone H2B type 1-N (126 aa).

Residues 1 to 12 (MPEPSKSAPAPK) show a composition bias toward low complexity. The tract at residues 1 to 36 (MPEPSKSAPAPKKGSKKAVTKAQKKDGKKRKRSRKE) is disordered. P2 bears the N-acetylproline mark. Position 3 is an ADP-ribosyl glutamic acid (E3). K6 bears the N6-(2-hydroxyisobutyryl)lysine; alternate mark. N6-(beta-hydroxybutyryl)lysine; alternate is present on K6. K6 bears the N6-acetyllysine; alternate mark. K6 bears the N6-butyryllysine; alternate mark. K6 carries the N6-crotonyllysine; alternate modification. K6 is subject to N6-lactoyllysine; alternate. K6 participates in a covalent cross-link: Glycyl lysine isopeptide (Lys-Gly) (interchain with G-Cter in SUMO2); alternate. S7 carries the ADP-ribosylserine modification. K12 carries the post-translational modification N6-(beta-hydroxybutyryl)lysine; alternate. N6-acetyllysine; alternate is present on residues K12 and K13. Residues K12 and K13 each carry the N6-crotonyllysine; alternate modification. Residue K12 is modified to N6-lactoyllysine; alternate. At K13 the chain carries N6-(2-hydroxyisobutyryl)lysine; alternate. At S15 the chain carries Phosphoserine; by STK4/MST1. N6-acetyllysine; alternate occurs at positions 16, 17, 21, and 24. 4 positions are modified to N6-crotonyllysine; alternate: K16, K17, K21, and K24. N6-lactoyllysine; alternate occurs at positions 16, 17, 21, and 24. N6-(beta-hydroxybutyryl)lysine; alternate is present on residues K17 and K21. K17 is subject to N6-glutaryllysine; alternate. Residues K21 and K24 each carry the N6-(2-hydroxyisobutyryl)lysine; alternate modification. K21 bears the N6-butyryllysine; alternate mark. K21 participates in a covalent cross-link: Glycyl lysine isopeptide (Lys-Gly) (interchain with G-Cter in SUMO2); alternate. Position 25 is an N6-(2-hydroxyisobutyryl)lysine (K25). An N6-(2-hydroxyisobutyryl)lysine; alternate modification is found at K35. N6-(beta-hydroxybutyryl)lysine; alternate is present on K35. K35 is subject to N6-crotonyllysine; alternate. N6-glutaryllysine; alternate is present on K35. The residue at position 35 (K35) is an N6-succinyllysine; alternate. Residue K35 forms a Glycyl lysine isopeptide (Lys-Gly) (interchain with G-Cter in ubiquitin); alternate linkage. PolyADP-ribosyl glutamic acid is present on E36. S37 bears the Phosphoserine; by AMPK mark. N6-(2-hydroxyisobutyryl)lysine; alternate is present on residues K44, K47, and K58. K44 is modified (N6-lactoyllysine; alternate). N6-glutaryllysine; alternate occurs at positions 44 and 47. At K47 the chain carries N6-methyllysine; alternate. K58 carries the N6,N6-dimethyllysine; alternate modification. A Dimethylated arginine modification is found at R80. K86 carries the N6-(2-hydroxyisobutyryl)lysine; alternate modification. K86 carries the post-translational modification N6-(beta-hydroxybutyryl)lysine; alternate. Residue K86 is modified to N6-acetyllysine; alternate. K86 carries the post-translational modification N6-lactoyllysine; alternate. Residue K86 is modified to N6,N6,N6-trimethyllysine; alternate. 2 positions are modified to omega-N-methylarginine: R87 and R93. K109 bears the N6-(2-hydroxyisobutyryl)lysine; alternate mark. N6-lactoyllysine; alternate is present on K109. K109 carries the N6-glutaryllysine; alternate modification. N6-methyllysine; alternate is present on K109. S113 carries an O-linked (GlcNAc) serine glycan. At T116 the chain carries Phosphothreonine. N6-(2-hydroxyisobutyryl)lysine; alternate is present on residues K117 and K121. An N6-(beta-hydroxybutyryl)lysine; alternate mark is found at K117 and K121. 2 positions are modified to N6-lactoyllysine; alternate: K117 and K121. An N6-glutaryllysine; alternate mark is found at K117 and K121. Residues K117 and K121 each carry the N6-succinyllysine; alternate modification. K117 bears the N6-malonyllysine; alternate mark. An N6-methylated lysine; alternate modification is found at K117. Residue K121 forms a Glycyl lysine isopeptide (Lys-Gly) (interchain with G-Cter in ubiquitin); alternate linkage.

Belongs to the histone H2B family. The nucleosome is a histone octamer containing two molecules each of H2A, H2B, H3 and H4 assembled in one H3-H4 heterotetramer and two H2A-H2B heterodimers. The octamer wraps approximately 147 bp of DNA. In terms of processing, monoubiquitination at Lys-35 (H2BK34Ub) by the MSL1/MSL2 dimer is required for histone H3 'Lys-4' (H3K4me) and 'Lys-79' (H3K79me) methylation and transcription activation at specific gene loci, such as HOXA9 and MEIS1 loci. Similarly, monoubiquitination at Lys-121 (H2BK120Ub) by the RNF20/40 complex gives a specific tag for epigenetic transcriptional activation and is also prerequisite for histone H3 'Lys-4' and 'Lys-79' methylation. It also functions cooperatively with the FACT dimer to stimulate elongation by RNA polymerase II. H2BK120Ub also acts as a regulator of mRNA splicing: deubiquitination by USP49 is required for efficient cotranscriptional splicing of a large set of exons. Post-translationally, phosphorylation at Ser-37 (H2BS36ph) by AMPK in response to stress promotes transcription. Phosphorylated on Ser-15 (H2BS14ph) by STK4/MST1 during apoptosis; which facilitates apoptotic chromatin condensation. Also phosphorylated on Ser-15 in response to DNA double strand breaks (DSBs), and in correlation with somatic hypermutation and immunoglobulin class-switch recombination. GlcNAcylation at Ser-113 promotes monoubiquitination of Lys-121. It fluctuates in response to extracellular glucose, and associates with transcribed genes. In terms of processing, ADP-ribosylated by PARP1 or PARP2 on Ser-7 (H2BS6ADPr) in response to DNA damage. H2BS6ADPr promotes recruitment of CHD1L. Mono-ADP-ribosylated on Glu-3 (H2BE2ADPr) by PARP3 in response to single-strand breaks. Poly ADP-ribosylation on Glu-36 (H2BE35ADPr) by PARP1 regulates adipogenesis: it inhibits phosphorylation at Ser-37 (H2BS36ph), thereby blocking expression of pro-adipogenetic genes. Post-translationally, crotonylation (Kcr) is specifically present in male germ cells and marks testis-specific genes in post-meiotic cells, including X-linked genes that escape sex chromosome inactivation in haploid cells. Crotonylation marks active promoters and enhancers and confers resistance to transcriptional repressors. It is also associated with post-meiotically activated genes on autosomes. Lactylated in macrophages by EP300/P300 by using lactoyl-CoA directly derived from endogenous or exogenous lactate, leading to stimulates gene transcription.

It is found in the nucleus. Its subcellular location is the chromosome. In terms of biological role, core component of nucleosome. Nucleosomes wrap and compact DNA into chromatin, limiting DNA accessibility to the cellular machineries which require DNA as a template. Histones thereby play a central role in transcription regulation, DNA repair, DNA replication and chromosomal stability. DNA accessibility is regulated via a complex set of post-translational modifications of histones, also called histone code, and nucleosome remodeling. The polypeptide is Histone H2B type 1-N (Homo sapiens (Human)).